A 256-amino-acid polypeptide reads, in one-letter code: Thiazole synthase (256 aa).

K95 (schiff-base intermediate with DXP) is an active-site residue. 1-deoxy-D-xylulose 5-phosphate is bound by residues G156, 182 to 183 (AG), and 204 to 205 (NT).

Belongs to the ThiG family. Homotetramer. Forms heterodimers with either ThiH or ThiS.

It is found in the cytoplasm. The enzyme catalyses [ThiS sulfur-carrier protein]-C-terminal-Gly-aminoethanethioate + 2-iminoacetate + 1-deoxy-D-xylulose 5-phosphate = [ThiS sulfur-carrier protein]-C-terminal Gly-Gly + 2-[(2R,5Z)-2-carboxy-4-methylthiazol-5(2H)-ylidene]ethyl phosphate + 2 H2O + H(+). Its pathway is cofactor biosynthesis; thiamine diphosphate biosynthesis. Functionally, catalyzes the rearrangement of 1-deoxy-D-xylulose 5-phosphate (DXP) to produce the thiazole phosphate moiety of thiamine. Sulfur is provided by the thiocarboxylate moiety of the carrier protein ThiS. In vitro, sulfur can be provided by H(2)S. This is Thiazole synthase from Escherichia coli (strain 55989 / EAEC).